The sequence spans 235 residues: 2-C-methyl-D-erythritol 4-phosphate cytidylyltransferase (235 aa).

Belongs to the IspD/TarI cytidylyltransferase family. IspD subfamily. Homodimer.

The enzyme catalyses 2-C-methyl-D-erythritol 4-phosphate + CTP + H(+) = 4-CDP-2-C-methyl-D-erythritol + diphosphate. The protein operates within isoprenoid biosynthesis; isopentenyl diphosphate biosynthesis via DXP pathway; isopentenyl diphosphate from 1-deoxy-D-xylulose 5-phosphate: step 2/6. In terms of biological role, catalyzes the formation of 4-diphosphocytidyl-2-C-methyl-D-erythritol from CTP and 2-C-methyl-D-erythritol 4-phosphate (MEP). This is 2-C-methyl-D-erythritol 4-phosphate cytidylyltransferase from Serratia proteamaculans (strain 568).